The sequence spans 84 residues: Apoptosis inhibitor Rv3654c (84 aa).

Positions 1–39 are cleaved as a signal peptide; sequence MVARHRAQAAADLASLAAAARLPSGLAAACARATLVARA.

Interacts with human polypyrimidine tract binding protein-associated splicing factor (PSF).

The protein localises to the secreted. The protein resides in the host cytoplasm. Its function is as follows. Effector protein that participates in the suppression of macrophage apoptosis by blocking the extrinsic pathway. Recognizes the host polypyrimidine tract binding protein-associated splicing factor (PSF), which probably leads to its cleavage, diminishing the level of caspase-8 in macrophages. In Mycobacterium tuberculosis (strain ATCC 25618 / H37Rv), this protein is Apoptosis inhibitor Rv3654c.